We begin with the raw amino-acid sequence, 121 residues long: Small ribosomal subunit protein bS16 (121 aa).

The segment covering 85-110 has biased composition (basic and acidic residues); it reads REARNNPKKAEPGKKAQERAAERAAK. The interval 85–121 is disordered; it reads REARNNPKKAEPGKKAQERAAERAAKAAEASEAASAE. Residues 111–121 are compositionally biased toward low complexity; the sequence is AAEASEAASAE.

This sequence belongs to the bacterial ribosomal protein bS16 family.

The chain is Small ribosomal subunit protein bS16 from Azorhizobium caulinodans (strain ATCC 43989 / DSM 5975 / JCM 20966 / LMG 6465 / NBRC 14845 / NCIMB 13405 / ORS 571).